Here is a 103-residue protein sequence, read N- to C-terminus: MEVPGSSKKMIATQEEMSAAKIALGSRDMCAHLLIPLNKCRQAEFYLPWKCEDERHVYEKCEYELVMERMLAMKKIREEEALAKQNKLQGNAAVPLIPKTANA.

In terms of domain architecture, CHCH spans R27–R69. 2 short sequence motifs (cx9C motif) span residues C30 to C40 and C51 to C61. Disulfide bonds link C30–C61 and C40–C51.

The protein belongs to the complex I NDUFB7 subunit family. Complex I is composed of at least 49 different subunits.

It localises to the mitochondrion. Its subcellular location is the mitochondrion inner membrane. It is found in the mitochondrion intermembrane space. Functionally, accessory subunit of the mitochondrial membrane respiratory chain NADH dehydrogenase (Complex I), that is believed not to be involved in catalysis. Complex I functions in the transfer of electrons from NADH to the respiratory chain. The immediate electron acceptor for the enzyme is believed to be ubiquinone. The chain is NADH dehydrogenase [ubiquinone] 1 beta subcomplex subunit 7 from Arabidopsis thaliana (Mouse-ear cress).